A 2216-amino-acid polypeptide reads, in one-letter code: Protein Ycf2 (2216 aa).

Residue 1567 to 1574 participates in ATP binding; sequence GSIGTGRS.

This sequence belongs to the Ycf2 family.

It is found in the plastid stroma. Probable ATPase of unknown function. Its presence in a non-photosynthetic plant (Epifagus virginiana) and experiments in tobacco indicate that it has an essential function which is probably not related to photosynthesis. This chain is Protein Ycf2, found in Epifagus virginiana (Beechdrops).